Reading from the N-terminus, the 66-residue chain is MKAGIHPNFKKATVKCACGNEFETGSVKEEVRVEICSECHPFYTGRQKFASADGRVDRFNKKYGLK.

The Zn(2+) site is built by Cys16, Cys18, Cys36, and Cys39.

It belongs to the bacterial ribosomal protein bL31 family. Type A subfamily. As to quaternary structure, part of the 50S ribosomal subunit during exponential growth. Zn(2+) serves as cofactor.

Its function is as follows. Binds the 23S rRNA. Functionally, while neither of the L31 paralogs is essential, this protein seems to function as the main L31 protein. Has a lower affinity for 70S ribosomes than the non-zinc-containing paralog L31B (ytiA); is displaced by it to varying extents, even under zinc-replete conditions. The protein is Large ribosomal subunit protein bL31 (rpmE) of Bacillus subtilis (strain 168).